The primary structure comprises 582 residues: Acylamino-acid-releasing enzyme (582 aa).

Catalysis depends on charge relay system residues Ser-445, Asp-524, and His-556.

The protein belongs to the peptidase S9C family.

Its subcellular location is the cytoplasm. The catalysed reaction is Cleavage of an N-acetyl or N-formyl amino acid from the N-terminus of a polypeptide.. In terms of biological role, this enzyme catalyzes the hydrolysis of the N-terminal peptide bond of an N-acetylated peptide to generate an N-acetylated amino acid and a peptide with a free N-terminus. The polypeptide is Acylamino-acid-releasing enzyme (Aeropyrum pernix (strain ATCC 700893 / DSM 11879 / JCM 9820 / NBRC 100138 / K1)).